The sequence spans 422 residues: C-type lectin domain family 4 member M (422 aa).

The Cytoplasmic portion of the chain corresponds to 1–49; it reads MSDSKEPRVQPLGLLEEDPTTSGIRLFPRDFQFQQTHGHKSSTGCLGHG. The Endocytosis signal signature appears at 14 to 15; sequence LL. The chain crosses the membrane as a helical; Signal-anchor for type II membrane protein span at residues 50–70; sequence PLVLQLLSFALLAGVLVAILV. The Extracellular portion of the chain corresponds to 71–422; the sequence is QVYKVPSSLS…KKPIACFRDE (352 aa). N92 carries N-linked (GlcNAc...) asparagine glycosylation. Repeat copies occupy residues 108-130, 131-151, 154-176, 177-199, 200-222, 223-245, 246-268, and 269-291. The segment at 108-292 is 8 X approximate tandem repeats; that stretch reads KLQEIYQELT…AFERLCCRCP (185 aa). 4 disulfides stabilise this stretch: C288-C418, C291-C302, C319-C412, and C391-C404. The region spanning 297 to 413 is the C-type lectin domain; it reads FFQGNCYFMS…CNVDNYWICK (117 aa). Ca(2+) contacts are provided by E382, N384, S386, E389, N400, and D401. N384 carries N-linked (GlcNAc...) asparagine glycosylation.

As to quaternary structure, homotetramer.

The protein resides in the membrane. Functionally, probable pathogen-recognition receptor involved in peripheral immune surveillance in liver. May mediate the endocytosis of pathogens which are subsequently degraded in lysosomal compartments. Probably recognizes in a calcium-dependent manner high mannose N-linked oligosaccharides in a variety of pathogen antigens. Is a receptor for ICAM3, probably by binding to mannose-like carbohydrates. This is C-type lectin domain family 4 member M (CLEC4M) from Symphalangus syndactylus (Siamang).